The chain runs to 126 residues: Aspartate 1-decarboxylase (126 aa).

Catalysis depends on S25, which acts as the Schiff-base intermediate with substrate; via pyruvic acid. Pyruvic acid (Ser) is present on S25. T57 is a binding site for substrate. Residue Y58 is the Proton donor of the active site. Residue 73–75 (GGA) participates in substrate binding.

The protein belongs to the PanD family. Heterooctamer of four alpha and four beta subunits. Pyruvate is required as a cofactor. Is synthesized initially as an inactive proenzyme, which is activated by self-cleavage at a specific serine bond to produce a beta-subunit with a hydroxyl group at its C-terminus and an alpha-subunit with a pyruvoyl group at its N-terminus.

It is found in the cytoplasm. The enzyme catalyses L-aspartate + H(+) = beta-alanine + CO2. It functions in the pathway cofactor biosynthesis; (R)-pantothenate biosynthesis; beta-alanine from L-aspartate: step 1/1. In terms of biological role, catalyzes the pyruvoyl-dependent decarboxylation of aspartate to produce beta-alanine. The polypeptide is Aspartate 1-decarboxylase (Xanthomonas campestris pv. campestris (strain B100)).